The chain runs to 383 residues: MRIGVGVSTAPDVRRAAAEAAAHAREELAGGTPALAVLLGSRSHTDQAVDLLAAVQASVEPAALIGCVAQGIVAGRHELENEPAVAVWLASGPPAETFHLDFVRTGSGALITGYRFDRTAHDLHLLLPDPYSFPSNLLIEHLNTDLPGTTVVGGVVSGGRRRGDTRLFRDRDVLTSGLVGVRLPGAHSVSVVSQGCRPIGEPYIVTGADGAVITELGGRPPLHRLREIVLGMAPDEQELVSRGLQIGIVVDEHLAVPGQGDFLIRGLLGADPTTGAIGIGEVVEVGATVQFQVRDAAAADKDLRLAVERAAAELPGPPVGGLLFTCNGRGRRMFGVTDHDASTIEDLLGGIPLAGFFAAGEIGPVAGHNALHGFTASMALFVD.

Transmembrane regions (helical) follow at residues 49–69 (VDLL…GCVA) and 347–367 (LLGG…PVAG).

It to M.tuberculosis Rv0874c.

Its subcellular location is the cell membrane. This is an uncharacterized protein from Mycobacterium tuberculosis (strain CDC 1551 / Oshkosh).